The following is a 511-amino-acid chain: MKKRALVSVSDKTGVVEFVKGLLEQGIEVISTGGTKKLLEANGLQVIGISEVTGFPEIMDGRVKTLHPNIHGGLLAVRDNETHVIQMNELGIQPIDFVVVNLYPFKETIAKPDVTFADAIENIDIGGPTMIRSAAKNHQFVSVIVDPVDYDVVLAELKENGEVMDETKRKLAAKVFRHTAAYDALISNYLTEQMGEESPETLTVTFEKKQDLRYGENPHQKATFYKAPFAATSSVAYAEQLHGKELSYNNINDADAALSIVKEFTEPAVVAVKHMNPCGVGVGTDIHEAYTRAYEADPVSIFGGIIAANREIDKATAEKLHEIFLEIIIAPSFSKEALEVLQSKKNLRLLTVNIEKATSASKKLTSVQGGLLVQEEDTLSLDESTISIPTKREPSEQEWKDLKLAWKVVKHVKSNAIVLAKDDMTIGVGAGQMNRVGSAKIAITQAGEKAQGSALASDAFFPMPDTLEEAAKAGITAIIQPGGSIRDEDSIKVADTYGIAMVFTGVRHFKH.

Positions 1 to 145 (MKKRALVSVS…KNHQFVSVIV (145 aa)) constitute an MGS-like domain.

The protein belongs to the PurH family.

The catalysed reaction is (6R)-10-formyltetrahydrofolate + 5-amino-1-(5-phospho-beta-D-ribosyl)imidazole-4-carboxamide = 5-formamido-1-(5-phospho-D-ribosyl)imidazole-4-carboxamide + (6S)-5,6,7,8-tetrahydrofolate. It catalyses the reaction IMP + H2O = 5-formamido-1-(5-phospho-D-ribosyl)imidazole-4-carboxamide. Its pathway is purine metabolism; IMP biosynthesis via de novo pathway; 5-formamido-1-(5-phospho-D-ribosyl)imidazole-4-carboxamide from 5-amino-1-(5-phospho-D-ribosyl)imidazole-4-carboxamide (10-formyl THF route): step 1/1. It functions in the pathway purine metabolism; IMP biosynthesis via de novo pathway; IMP from 5-formamido-1-(5-phospho-D-ribosyl)imidazole-4-carboxamide: step 1/1. This Bacillus cereus (strain G9842) protein is Bifunctional purine biosynthesis protein PurH.